A 189-amino-acid polypeptide reads, in one-letter code: Transcription factor FapR (189 aa).

Belongs to the FapR family.

Transcriptional factor involved in regulation of membrane lipid biosynthesis by repressing genes involved in fatty acid and phospholipid metabolism. The protein is Transcription factor FapR of Listeria monocytogenes serotype 4a (strain HCC23).